A 932-amino-acid polypeptide reads, in one-letter code: 2-oxoglutarate dehydrogenase E1 component (932 aa).

Belongs to the alpha-ketoglutarate dehydrogenase family. In terms of assembly, homodimer. Part of the 2-oxoglutarate dehydrogenase (OGDH) complex composed of E1 (2-oxoglutarate dehydrogenase), E2 (dihydrolipoamide succinyltransferase) and E3 (dihydrolipoamide dehydrogenase); the complex contains multiple copies of the three enzymatic components (E1, E2 and E3). Thiamine diphosphate is required as a cofactor.

The catalysed reaction is N(6)-[(R)-lipoyl]-L-lysyl-[protein] + 2-oxoglutarate + H(+) = N(6)-[(R)-S(8)-succinyldihydrolipoyl]-L-lysyl-[protein] + CO2. In terms of biological role, E1 component of the 2-oxoglutarate dehydrogenase (OGDH) complex which catalyzes the decarboxylation of 2-oxoglutarate, the first step in the conversion of 2-oxoglutarate to succinyl-CoA and CO(2). This chain is 2-oxoglutarate dehydrogenase E1 component, found in Staphylococcus aureus (strain bovine RF122 / ET3-1).